The following is a 372-amino-acid chain: MRIVVKVGTSTLTYENGKLNLEIMEKLVRQIANLLNRGEEVVLVTSGAIGAGMGKLNLKEKPKTIPEKQSLAAIGQGLLIEIYEKFFNEYGKITAQVLLTKEDFSDRRRYLNVSYTLSNLLKWGVVPIINENDTVTVDEIKIGDNDTLAALLASLVEADILIILTDIDGLYDKDPRIYKEAKIIEVVEEFSDELFKIAGSAGTKRGTGGMYTKIQAAKICWNSGVKMIIANGKIDNVLNQIANGEKIGTTFLPMKKPISSRKVWIAFNAKVSGRLFIDEGAAKAIIKHGKSLLPSGVVKTEGDYDVGDCVAVVDHQEKEIARGLINYSSEEVEKIKGCKTHEIEKILGYKYYDEVIHRDNLVILERGEKFGS.

Lysine 6 lines the ATP pocket. Residues serine 46, aspartate 133, and asparagine 145 each contribute to the substrate site. ATP-binding positions include 165–166 (TD) and 207–213 (TGGMYTK). A PUA domain is found at 272-350 (SGRLFIDEGA…HEIEKILGYK (79 aa)).

Belongs to the glutamate 5-kinase family.

The protein resides in the cytoplasm. It carries out the reaction L-glutamate + ATP = L-glutamyl 5-phosphate + ADP. It participates in amino-acid biosynthesis; L-proline biosynthesis; L-glutamate 5-semialdehyde from L-glutamate: step 1/2. Functionally, catalyzes the transfer of a phosphate group to glutamate to form L-glutamate 5-phosphate. In Thermoanaerobacter pseudethanolicus (strain ATCC 33223 / 39E) (Clostridium thermohydrosulfuricum), this protein is Glutamate 5-kinase.